A 286-amino-acid chain; its full sequence is UDP-3-O-acyl-N-acetylglucosamine deacetylase (286 aa).

Zn(2+) contacts are provided by H79, H237, and D241. The active-site Proton donor is the H264.

It belongs to the LpxC family. The cofactor is Zn(2+).

The enzyme catalyses a UDP-3-O-[(3R)-3-hydroxyacyl]-N-acetyl-alpha-D-glucosamine + H2O = a UDP-3-O-[(3R)-3-hydroxyacyl]-alpha-D-glucosamine + acetate. It functions in the pathway glycolipid biosynthesis; lipid IV(A) biosynthesis; lipid IV(A) from (3R)-3-hydroxytetradecanoyl-[acyl-carrier-protein] and UDP-N-acetyl-alpha-D-glucosamine: step 2/6. Functionally, catalyzes the hydrolysis of UDP-3-O-myristoyl-N-acetylglucosamine to form UDP-3-O-myristoylglucosamine and acetate, the committed step in lipid A biosynthesis. The chain is UDP-3-O-acyl-N-acetylglucosamine deacetylase from Brucella melitensis biotype 2 (strain ATCC 23457).